We begin with the raw amino-acid sequence, 628 residues long: tRNA uridine 5-carboxymethylaminomethyl modification enzyme MnmG (628 aa).

Residues 14–19 (GAGHAG), Val-126, and Ser-181 contribute to the FAD site. 273-287 (GPRYCPSIEDKVVRF) contacts NAD(+). FAD is bound at residue Gln-370.

The protein belongs to the MnmG family. As to quaternary structure, homodimer. Heterotetramer of two MnmE and two MnmG subunits. FAD serves as cofactor.

The protein localises to the cytoplasm. NAD-binding protein involved in the addition of a carboxymethylaminomethyl (cmnm) group at the wobble position (U34) of certain tRNAs, forming tRNA-cmnm(5)s(2)U34. The sequence is that of tRNA uridine 5-carboxymethylaminomethyl modification enzyme MnmG from Bacillus subtilis (strain 168).